The chain runs to 433 residues: GTPase Obg (433 aa).

In terms of domain architecture, Obg spans 1-158 (MFVDQVKIYV…RNVILELKLL (158 aa)). One can recognise an OBG-type G domain in the interval 159-329 (ADVGLVGFPS…LLFAIADLLE (171 aa)). GTP-binding positions include 165–172 (GFPSVGKS), 190–194 (FTTLV), 212–215 (DLPG), 282–285 (NKMD), and 310–312 (SAA). Mg(2+) contacts are provided by serine 172 and threonine 192. The 79-residue stretch at 350 to 428 (KYEKEELPFT…LLDYEFEFVD (79 aa)) folds into the OCT domain.

This sequence belongs to the TRAFAC class OBG-HflX-like GTPase superfamily. OBG GTPase family. Monomer. Mg(2+) serves as cofactor.

It is found in the cytoplasm. An essential GTPase which binds GTP, GDP and possibly (p)ppGpp with moderate affinity, with high nucleotide exchange rates and a fairly low GTP hydrolysis rate. Plays a role in control of the cell cycle, stress response, ribosome biogenesis and in those bacteria that undergo differentiation, in morphogenesis control. In Geobacillus thermodenitrificans (strain NG80-2), this protein is GTPase Obg.